A 306-amino-acid polypeptide reads, in one-letter code: Ribosomal RNA small subunit methyltransferase H (306 aa).

S-adenosyl-L-methionine-binding positions include 33–35, aspartate 51, phenylalanine 78, aspartate 96, and glutamine 103; that span reads GGY.

This sequence belongs to the methyltransferase superfamily. RsmH family.

It localises to the cytoplasm. It carries out the reaction cytidine(1402) in 16S rRNA + S-adenosyl-L-methionine = N(4)-methylcytidine(1402) in 16S rRNA + S-adenosyl-L-homocysteine + H(+). Specifically methylates the N4 position of cytidine in position 1402 (C1402) of 16S rRNA. The protein is Ribosomal RNA small subunit methyltransferase H of Rickettsia typhi (strain ATCC VR-144 / Wilmington).